The sequence spans 441 residues: tRNA modification GTPase MnmE (441 aa).

Positions 22, 80, and 118 each coordinate (6S)-5-formyl-5,6,7,8-tetrahydrofolate. Residues 213 to 366 form the TrmE-type G domain; the sequence is GIYIAIVGEP…LLNLIKQRVE (154 aa). GTP is bound by residues 223–228, 242–248, and 267–270; these read NSGKST, SEYAGTT, and DTAG. Ser227 and Thr248 together coordinate Mg(2+). Lys441 is a (6S)-5-formyl-5,6,7,8-tetrahydrofolate binding site.

The protein belongs to the TRAFAC class TrmE-Era-EngA-EngB-Septin-like GTPase superfamily. TrmE GTPase family. In terms of assembly, homodimer. Heterotetramer of two MnmE and two MnmG subunits. The cofactor is K(+).

It is found in the cytoplasm. Functionally, exhibits a very high intrinsic GTPase hydrolysis rate. Involved in the addition of a carboxymethylaminomethyl (cmnm) group at the wobble position (U34) of certain tRNAs, forming tRNA-cmnm(5)s(2)U34. The protein is tRNA modification GTPase MnmE of Ehrlichia canis (strain Jake).